A 469-amino-acid chain; its full sequence is Glutamate--tRNA ligase (469 aa).

Positions 11–21 (PSPTGFIHLGN) match the 'HIGH' region motif. The 'KMSKS' region signature appears at 243–247 (KMSKR). An ATP-binding site is contributed by Lys246.

This sequence belongs to the class-I aminoacyl-tRNA synthetase family. Glutamate--tRNA ligase type 1 subfamily. Monomer.

The protein localises to the cytoplasm. It catalyses the reaction tRNA(Glu) + L-glutamate + ATP = L-glutamyl-tRNA(Glu) + AMP + diphosphate. Functionally, catalyzes the attachment of glutamate to tRNA(Glu) in a two-step reaction: glutamate is first activated by ATP to form Glu-AMP and then transferred to the acceptor end of tRNA(Glu). The polypeptide is Glutamate--tRNA ligase (Burkholderia lata (strain ATCC 17760 / DSM 23089 / LMG 22485 / NCIMB 9086 / R18194 / 383)).